We begin with the raw amino-acid sequence, 1381 residues long: Hepatocyte growth factor receptor (1381 aa).

Residues 1–24 (MKAPAVLAPGILVLLFTLVQKSDG) form the signal peptide. The Extracellular portion of the chain corresponds to 25–934 (ECKEALVKSE…VQPDQNFTGL (910 aa)). In terms of domain architecture, Sema spans 27 to 515 (KEALVKSEMN…TGKKITKIPL (489 aa)). N45 carries N-linked (GlcNAc...) asparagine glycosylation. 4 cysteine pairs are disulfide-bonded: C95–C101, C98–C160, C133–C141, and C172–C175. The N-linked (GlcNAc...) asparagine glycan is linked to N106. N202 and N358 each carry an N-linked (GlcNAc...) asparagine glycan. Disulfide bonds link C298-C363 and C385-C397. N399, N405, and N449 each carry an N-linked (GlcNAc...) asparagine glycan. 4 disulfides stabilise this stretch: C520/C538, C526/C561, C529/C545, and C541/C551. N-linked (GlcNAc...) asparagine glycosylation is present at N553. IPT/TIG domains lie at 563 to 655 (PTIY…FSYV), 657 to 739 (PIIT…FSYR), and 742 to 836 (PIVY…LIYV). O-linked (Man) threonine glycosylation occurs at T582. N-linked (GlcNAc...) asparagine glycans are attached at residues N607 and N635. O-linked (Man) threonine glycans are attached at residues T676 and T761. Residues N785, N879, and N930 are each glycosylated (N-linked (GlcNAc...) asparagine). Residues 935 to 955 (IVGVVSISIILLLLLGLFLWL) traverse the membrane as a helical segment. Topologically, residues 956-1381 (KRRKQIKDLG…QDNVDGEVDT (426 aa)) are cytoplasmic. Residue S966 is modified to Phosphoserine. Position 977 is a phosphothreonine (T977). Residues S990, S997, and S1000 each carry the phosphoserine modification. Residue Y1003 is modified to Phosphotyrosine. Residues 1078 to 1345 (VHFNEVIGRG…RISAIFSTFI (268 aa)) form the Protein kinase domain. Residues 1084–1092 (IGRGHFGCV) and K1110 contribute to the ATP site. Residue D1204 is the Proton acceptor of the active site. The interaction with RANBP9 stretch occupies residues 1212–1381 (LDEKFTVKVA…QDNVDGEVDT (170 aa)). The residue at position 1230 (Y1230) is a Phosphotyrosine. Phosphotyrosine; by autocatalysis occurs at positions 1234 and 1235. The residue at position 1289 (T1289) is a Phosphothreonine. The interaction with MUC20 stretch occupies residues 1320 to 1359 (WHPKAELRPSFSELVSRISAIFSTFIGEHYVHVNATYVNV). Y1349 and Y1356 each carry phosphotyrosine; by autocatalysis. A Phosphotyrosine modification is found at Y1365.

It belongs to the protein kinase superfamily. Tyr protein kinase family. In terms of assembly, heterodimer made of an alpha chain (50 kDa) and a beta chain (145 kDa) which are disulfide linked. Binds PLXNB1. Interacts when phosphorylated with downstream effectors including STAT3, PIK3R1, SRC, PCLG1, GRB2 and GAB1. Interacts with SPSB1, SPSB2 and SPSB4. Interacts with INPP5D/SHIP1. When phosphorylated at Tyr-1356, interacts with INPPL1/SHIP2. Interacts with RANBP9 and RANBP10, as well as SPSB1, SPSB2, SPSB3 and SPSB4. SPSB1 binding occurs in the presence and in the absence of HGF, however HGF treatment has a positive effect on this interaction. Interacts with MUC20; prevents interaction with GRB2 and suppresses hepatocyte growth factor-induced cell proliferation. Interacts with GRB10. Interacts with PTPN1 and PTPN2. Interacts with HSP90AA1 and HSP90AB1; the interaction suppresses MET kinase activity. Interacts with tensin TNS3. Interacts (when phosphorylated) with tensin TNS4 (via SH2 domain); the interaction increases MET protein stability by inhibiting MET endocytosis and subsequent lysosomal degradation. Autophosphorylated in response to ligand binding on Tyr-1234 and Tyr-1235 in the kinase domain leading to further phosphorylation of Tyr-1349 and Tyr-1356 in the C-terminal multifunctional docking site. Dephosphorylated by PTPRJ at Tyr-1349 and Tyr-1365. Dephosphorylated by PTPN1 and PTPN2. In terms of processing, ubiquitinated. Ubiquitination by CBL regulates the receptor stability and activity through proteasomal degradation. Post-translationally, O-mannosylation of IPT/TIG domains by TMEM260 is required for protein maturation. O-mannosylated residues are composed of single mannose glycans that are not elongated or modified.

It localises to the membrane. It carries out the reaction L-tyrosyl-[protein] + ATP = O-phospho-L-tyrosyl-[protein] + ADP + H(+). Its activity is regulated as follows. In its inactive state, the C-terminal tail interacts with the catalytic domain and inhibits the kinase activity. Upon ligand binding, the C-terminal tail is displaced and becomes phosphorylated, thus increasing the kinase activity. In terms of biological role, receptor tyrosine kinase that transduces signals from the extracellular matrix into the cytoplasm by binding to hepatocyte growth factor/HGF ligand. Regulates many physiological processes including proliferation, scattering, morphogenesis and survival. Ligand binding at the cell surface induces autophosphorylation of MET on its intracellular domain that provides docking sites for downstream signaling molecules. Following activation by ligand, interacts with the PI3-kinase subunit PIK3R1, PLCG1, SRC, GRB2, STAT3 or the adapter GAB1. Recruitment of these downstream effectors by MET leads to the activation of several signaling cascades including the RAS-ERK, PI3 kinase-AKT, or PLCgamma-PKC. The RAS-ERK activation is associated with the morphogenetic effects while PI3K/AKT coordinates prosurvival effects. During embryonic development, MET signaling plays a role in gastrulation, development and migration of muscles and neuronal precursors, angiogenesis and kidney formation. In adults, participates in wound healing as well as organ regeneration and tissue remodeling. Also promotes differentiation and proliferation of hematopoietic cells. The sequence is that of Hepatocyte growth factor receptor (MET) from Equus caballus (Horse).